The chain runs to 465 residues: MTPAIFSPTTLPPSTATWPCSTSQKLITVRSPLKFKCRATSSSSSITDFDLYDLLGIDRSSDKSQIKSAYRALQKRCHPDIAGDPGHDMAIILNEAYQLLSDPISRQAYDKEQAKLEELRGYTGKPIYSVWCGPETEQRAAFVDEVKCVGCLKCALCAEKTFAIETAYGRARVVAQWADPESKIKEAIEACPVDCISMVERSDLAPLEFLMSKQPRGNVRIGVGNTVGERVSNVFVDVKKFQERYAKAMSRTTKETSQREVQISAVEAIRSISNWLYWRSSPYTKPLSPESNMSLTFTKRKKAVDPDIRKLQDVVAAMKQADQSGRTKEKGSAYLLGEDYWSPSNAALPSSGNNNGSKASSNPQVTRKTFPSEEKPTSRRENRRQFRIKKFPIGTAIVAVFLVQYQASYRAASELNDHIGGSLALSIVNSPWQQILLAGVTWYFIGAMLLQLVEAVQHKLEDKET.

Residues 1–38 (MTPAIFSPTTLPPSTATWPCSTSQKLITVRSPLKFKCR) constitute a chloroplast transit peptide. One can recognise a J domain in the interval 50 to 113 (DLYDLLGIDR…ISRQAYDKEQ (64 aa)). A disordered region spans residues 346-385 (AALPSSGNNNGSKASSNPQVTRKTFPSEEKPTSRRENRRQ). Over residues 350-362 (SSGNNNGSKASSN) the composition is skewed to low complexity. The span at 370–384 (FPSEEKPTSRRENRR) shows a compositional bias: basic and acidic residues.

This sequence belongs to the DnaJ family. Expressed in roots, exclusively in the stele.

The protein localises to the plastid. The protein resides in the chloroplast. May function together with HSC70 chaperone to assist protein folding and prevent protein aggregation during salt stress in the chloroplast. Involved in root development. Required for the position-dependent cell fate determination during root hair development. The protein is Chaperone protein dnaJ C76, chloroplastic of Arabidopsis thaliana (Mouse-ear cress).